Here is a 146-residue protein sequence, read N- to C-terminus: Large ribosomal subunit protein eL28 (146 aa).

The tract at residues 123–146 (VRAARKERSSKITFQRKAVRPKRH) is disordered.

The protein belongs to the eukaryotic ribosomal protein eL28 family.

The chain is Large ribosomal subunit protein eL28 from Trypanosoma cruzi.